The primary structure comprises 341 residues: Glucokinase (341 aa).

18-23 (GDIGGT) provides a ligand contact to ATP.

This sequence belongs to the bacterial glucokinase family.

The protein localises to the cytoplasm. The catalysed reaction is D-glucose + ATP = D-glucose 6-phosphate + ADP + H(+). The protein is Glucokinase of Rhizobium leguminosarum bv. trifolii (strain WSM2304).